The sequence spans 754 residues: Elongation factor G-1, mitochondrial (754 aa).

The transit peptide at 1–17 (MARFPTSPAPNRLLRLF) directs the protein to the mitochondrion. In terms of domain architecture, tr-type G spans 63–340 (DKLRNIGISA…GVVSFLPSPN (278 aa)). Residues 72-79 (AHIDSGKT), 139-143 (DTPGH), and 193-196 (NKLD) contribute to the GTP site.

Belongs to the TRAFAC class translation factor GTPase superfamily. Classic translation factor GTPase family. EF-G/EF-2 subfamily. As to expression, expressed in cotyledons and adult leaves at the same levels.

The protein resides in the mitochondrion. It participates in protein biosynthesis; polypeptide chain elongation. In terms of biological role, mitochondrial GTPase that catalyzes the GTP-dependent ribosomal translocation step during translation elongation. During this step, the ribosome changes from the pre-translocational (PRE) to the post-translocational (POST) state as the newly formed A-site-bound peptidyl-tRNA and P-site-bound deacylated tRNA move to the P and E sites, respectively. Catalyzes the coordinated movement of the two tRNA molecules, the mRNA and conformational changes in the ribosome. The chain is Elongation factor G-1, mitochondrial (MEFG1) from Arabidopsis thaliana (Mouse-ear cress).